Here is a 178-residue protein sequence, read N- to C-terminus: Caveolin-1 (178 aa).

Position 2 is an N-acetylserine (Ser2). Ser2 is subject to Phosphoserine. A required for homooligomerization region spans residues 2 to 94 (SGGKYVDSEG…WKASFTTFTV (93 aa)). At 2–104 (SGGKYVDSEG…TKYWFYRLLS (103 aa)) the chain is on the cytoplasmic side. Lys5 carries the post-translational modification N6-acetyllysine; alternate. Lys5 participates in a covalent cross-link: Glycyl lysine isopeptide (Lys-Gly) (interchain with G-Cter in ubiquitin); alternate. Residue Tyr6 is modified to Phosphotyrosine. Ser9 bears the Phosphoserine mark. At Tyr14 the chain carries Phosphotyrosine; by ABL1. Tyr25 is subject to Phosphotyrosine. Residues Lys26, Lys30, Lys39, Lys47, and Lys57 each participate in a glycyl lysine isopeptide (Lys-Gly) (interchain with G-Cter in ubiquitin) cross-link. Residues 82-94 (DGIWKASFTTFTV) form an interaction with CAVIN3 region. An intramembrane region (helical) is located at residues 105–125 (TIFGIPMALIWGIYFAILSFL). Topologically, residues 126 to 178 (HIWAVVPCIKSFLIEIQCISRVYSIYVHTFCDPLFEAIGKIFSNVRISMQKEI) are cytoplasmic. The segment at 131-142 (VPCIKSFLIEIQ) is interacts with SPRY1, SPRY2, SPRY3 and SPRY4. 3 S-palmitoyl cysteine lipidation sites follow: Cys133, Cys143, and Cys156. The interval 149-160 (SIYVHTFCDPLF) is interacts with SPRY1, SPRY2, and SPRY4. Residues 167–178 (FSNVRISMQKEI) are interacts with SPRY1, SPRY2, SPRY3 and SPRY4.

It belongs to the caveolin family. Homooligomer. Interacts with GLIPR2. Interacts with NOSTRIN. Interacts with SNAP25 and STX1A. Interacts (via the N-terminus) with DPP4; the interaction is direct. Interacts with CTNNB1, CDH1 and JUP. Interacts with PACSIN2; this interaction induces membrane tubulation. Interacts with SLC7A9. Interacts with BMX and BTK. Interacts with TGFBR1. Interacts with CAVIN3 (via leucine-zipper domain) in a cholesterol-sensitive manner. Interacts with CAVIN1. Interacts with EHD2 in a cholesterol-dependent manner. Forms a ternary complex with UBXN6 and VCP; mediates CAV1 targeting to lysosomes for degradation. Interacts with ABCG1; this interaction regulates ABCG1-mediated cholesterol efflux. Interacts with NEU3; this interaction enhances NEU3 sialidase activity within caveola. Interacts (via C-terminus) with SPRY1, SPRY2 (via C-terminus), SPRY3, and SPRY4. Interacts with IGFBP5; this interaction allows trafficking of IGFBP5 from the plasma membrane to the nucleus. In terms of processing, phosphorylated at Tyr-14 by ABL1 in response to oxidative stress. Ubiquitinated. Undergo monoubiquitination and multi- and/or polyubiquitination. Monoubiquitination of N-terminal lysines promotes integration in a ternary complex with UBXN6 and VCP which promotes oligomeric CAV1 targeting to lysosomes for degradation. Ubiquitinated by ZNRF1; leading to degradation and modulation of the TLR4-mediated immune response.

Its subcellular location is the golgi apparatus membrane. The protein resides in the cell membrane. It localises to the membrane. The protein localises to the caveola. It is found in the membrane raft. Functionally, may act as a scaffolding protein within caveolar membranes. Forms a stable heterooligomeric complex with CAV2 that targets to lipid rafts and drives caveolae formation. Mediates the recruitment of CAVIN proteins (CAVIN1/2/3/4) to the caveolae. Interacts directly with G-protein alpha subunits and can functionally regulate their activity. Involved in the costimulatory signal essential for T-cell receptor (TCR)-mediated T-cell activation. Its binding to DPP4 induces T-cell proliferation and NF-kappa-B activation in a T-cell receptor/CD3-dependent manner. Recruits CTNNB1 to caveolar membranes and may regulate CTNNB1-mediated signaling through the Wnt pathway. Negatively regulates TGFB1-mediated activation of SMAD2/3 by mediating the internalization of TGFBR1 from membrane rafts leading to its subsequent degradation. Binds 20(S)-hydroxycholesterol (20(S)-OHC). The sequence is that of Caveolin-1 (CAV1) from Oryctolagus cuniculus (Rabbit).